We begin with the raw amino-acid sequence, 406 residues long: MSGEQEPDDSYARVRAVVMTRDDSSGGWLQLGGGGLSSVTVSKTLQPGDSGGTEFLVHGERLRDKTVVLECVLRRDLVYNKVTPTFHHWRIGDKKFGLTFQSPADARAFDRGIRRAIEDLSQGLPASCHGESETSEDGPQVNKEDHYSTHNNDHFFRSDSIPTEELYRTSVIRPSPFENLNPRRAYIHNQVPLKPIRHVSFQDEDEIVRINPRDMIIRRYADYRHPDIFRNDVDREEPEDVTFFTKTDSKKPSYLYSPANGRDSLKEQKPVEVCKIQPTSSLKKSKGKKEDGEHSSCVYCQERFNHEENGRGKCQDAPDPIQRCIYQVSCMLCAESMLYHCMSDSEGDYSDPCSCDASDENLCLRWLALITLSFIAPCMCCYLPLRACHHCGEMCGCCGGKHKAAG.

Positions 3-120 constitute a WH1 domain; sequence GEQEPDDSYA…RGIRRAIEDL (118 aa). Residues 124 to 154 form a disordered region; sequence LPASCHGESETSEDGPQVNKEDHYSTHNNDH. The span at 142–154 shows a compositional bias: basic and acidic residues; sequence NKEDHYSTHNNDH. Positions 195 to 247 constitute a KBD domain; the sequence is PIRHVSFQDEDEIVRINPRDMIIRRYADYRHPDIFRNDVDREEPEDVTFFTKT. An SPR domain is found at 296-404; it reads SCVYCQERFN…CGCCGGKHKA (109 aa).

Post-translationally, palmitoylated by ZDHHC17/HIP14. In terms of processing, ubiquitinated. Phosphorylated on tyrosine.

The protein localises to the cell membrane. In terms of biological role, tyrosine kinase substrate that inhibits growth-factor-mediated activation of MAP kinase. This chain is Sprouty-related, EVH1 domain-containing protein 1 (spred1), found in Xenopus tropicalis (Western clawed frog).